The chain runs to 155 residues: RNA pyrophosphohydrolase (155 aa).

A Nudix hydrolase domain is found at 5–149 (EYRSGVGIML…KKPLYEKILS (145 aa)). A Nudix box motif is present at residues 39–60 (GGLEAKETPEVGVLRELEEETG).

Belongs to the Nudix hydrolase family. RppH subfamily. A divalent metal cation is required as a cofactor.

Accelerates the degradation of transcripts by removing pyrophosphate from the 5'-end of triphosphorylated RNA, leading to a more labile monophosphorylated state that can stimulate subsequent ribonuclease cleavage. The sequence is that of RNA pyrophosphohydrolase from Zymomonas mobilis subsp. mobilis (strain ATCC 31821 / ZM4 / CP4).